Consider the following 70-residue polypeptide: Small, acid-soluble spore protein 1 (70 aa).

Belongs to the alpha/beta-type SASP family.

In terms of biological role, SASP are bound to spore DNA. They are double-stranded DNA-binding proteins that cause DNA to change to an a-like conformation. They protect the DNA backbone from chemical and enzymatic cleavage and are thus involved in dormant spore's high resistance to UV light. The protein is Small, acid-soluble spore protein 1 of Bacillus subtilis.